The sequence spans 109 residues: Cytochrome c-550 (109 aa).

Heme c is bound by residues C13, C16, H17, and M79.

Post-translationally, binds 1 heme c group covalently per subunit.

The protein is Cytochrome c-550 of Nitrobacter winogradskyi (Nitrobacter agilis).